The chain runs to 250 residues: tRNA (guanine-N(1)-)-methyltransferase (250 aa).

Residues Gly-113 and 133-138 (VGDYVL) contribute to the S-adenosyl-L-methionine site.

This sequence belongs to the RNA methyltransferase TrmD family. As to quaternary structure, homodimer.

The protein localises to the cytoplasm. It carries out the reaction guanosine(37) in tRNA + S-adenosyl-L-methionine = N(1)-methylguanosine(37) in tRNA + S-adenosyl-L-homocysteine + H(+). In terms of biological role, specifically methylates guanosine-37 in various tRNAs. This Proteus mirabilis (strain HI4320) protein is tRNA (guanine-N(1)-)-methyltransferase.